The following is a 153-amino-acid chain: Large ribosomal subunit protein uL15 (153 aa).

Residues 15-42 (ARRIVGRGSSSGRGTTSGRGTKGQQARA) form a disordered region. A compositionally biased stretch (gly residues) spans 23-35 (SSSGRGTTSGRGT).

The protein belongs to the universal ribosomal protein uL15 family. Part of the 50S ribosomal subunit.

Functionally, binds to the 23S rRNA. The chain is Large ribosomal subunit protein uL15 from Treponema pallidum (strain Nichols).